The chain runs to 999 residues: Testis anion transporter 1 (999 aa).

Over methionine 1 to aspartate 93 the chain is Cytoplasmic. Residues leucine 94–leucine 114 form a helical membrane-spanning segment. Over threonine 115–glutamine 117 the chain is Extracellular. The helical transmembrane segment at leucine 118–phenylalanine 138 threads the bilayer. Glycine 139 is a topological domain (cytoplasmic). Residues serine 140 to leucine 160 traverse the membrane as a helical segment. Residues lysine 161–threonine 200 are Extracellular-facing. N-linked (GlcNAc...) asparagine glycosylation occurs at asparagine 190. Residues phenylalanine 201 to tyrosine 221 traverse the membrane as a helical segment. The Cytoplasmic segment spans residues leucine 222–tyrosine 230. A helical transmembrane segment spans residues leucine 231–valine 251. Residues serine 252–cysteine 268 lie on the Extracellular side of the membrane. The chain crosses the membrane as a helical span at residues isoleucine 269–leucine 289. Residues arginine 290–glutamate 305 lie on the Cytoplasmic side of the membrane. Residues phenylalanine 306–alanine 326 form a helical membrane-spanning segment. Topologically, residues threonine 327–arginine 354 are extracellular. A helical transmembrane segment spans residues valine 355–lysine 375. Over lysine 376–aspartate 390 the chain is Cytoplasmic. The chain crosses the membrane as a helical span at residues leucine 391–glycine 411. Residues serine 412–glutamine 427 lie on the Extracellular side of the membrane. The helical transmembrane segment at phenylalanine 428–phenylalanine 448 threads the bilayer. Residues histidine 449–asparagine 453 are Cytoplasmic-facing. The helical transmembrane segment at alanine 454–leucine 474 threads the bilayer. Over proline 475–serine 494 the chain is Extracellular. The chain crosses the membrane as a helical span at residues alanine 495–isoleucine 515. Topologically, residues threonine 516–glutamate 544 are cytoplasmic. Residues aspartate 541–alanine 796 enclose the STAS domain. A helical membrane pass occupies residues valine 545–valine 565. The Extracellular segment spans residues tyrosine 566–proline 999. An interaction with RACGAP1 region spans residues threonine 661 to proline 999. Disordered stretches follow at residues glutamate 678 to leucine 701 and serine 893 to proline 999. Residues asparagine 684–glutamate 696 are compositionally biased toward pro residues. Composition is skewed to acidic residues over residues serine 893 to serine 903 and glutamate 912 to proline 947. Over residues glycine 973–proline 982 the composition is skewed to polar residues.

Belongs to the SLC26A/SulP transporter (TC 2.A.53) family. As to quaternary structure, interacts with RACGAP1. Interacts with CFTR; stimulates anion transport activity of CFTR. Post-translationally, N-glycosylated. Expressed in testis and epididymis. Located at the end of the midpiece of the flagella, known as the annulus, in spermatozoa.

It is found in the membrane. The catalysed reaction is sulfate(out) + chloride(in) = sulfate(in) + chloride(out). It catalyses the reaction oxalate(in) + chloride(out) = oxalate(out) + chloride(in). Its function is as follows. Antiporter that mediates the exchange of sulfate and oxalate against chloride ions across a membrane. Stimulates anion transport activity of CFTR. May cooperate with CFTR in the regulation of chloride and bicarbonate ions fluxes required for activation of the ADCY10/PKA pathway during sperm motility and sperm capacitation. May play a role in sperm tail differentiation and motility and hence male fertility. The polypeptide is Testis anion transporter 1 (Mus musculus (Mouse)).